Reading from the N-terminus, the 159-residue chain is MENKFNHFDNEGNAIMVDVGNKNATERIAIASGKIRVNRDTFLAIEQGTAKKGDVLGVARVAGIMAAKKTSELIPLCHPLMITNCTIDFELLPKTLEVEVTSKVKVTGNTGVEMEALTAVSTTLLTIYDMCKAIDKAMEIDNIHLRRKTGGKSGDFINE.

Residues 76–78 (LCH) and 114–115 (ME) each bind substrate. The active site involves Asp129.

The protein belongs to the MoaC family. In terms of assembly, homohexamer; trimer of dimers.

The enzyme catalyses (8S)-3',8-cyclo-7,8-dihydroguanosine 5'-triphosphate = cyclic pyranopterin phosphate + diphosphate. It functions in the pathway cofactor biosynthesis; molybdopterin biosynthesis. In terms of biological role, catalyzes the conversion of (8S)-3',8-cyclo-7,8-dihydroguanosine 5'-triphosphate to cyclic pyranopterin monophosphate (cPMP). This Clostridium botulinum (strain Alaska E43 / Type E3) protein is Cyclic pyranopterin monophosphate synthase.